The following is a 421-amino-acid chain: uncharacterized protein (421 aa).

4 consecutive CBS domains span residues Met-13–Leu-74, Leu-74–Thr-133, Met-139–Lys-195, and Met-217–Met-274.

This is an uncharacterized protein from Methanocaldococcus jannaschii (strain ATCC 43067 / DSM 2661 / JAL-1 / JCM 10045 / NBRC 100440) (Methanococcus jannaschii).